A 1388-amino-acid chain; its full sequence is MNDLMKILGQTGQAATFDQIRIQIASPEQIRSWSYGEIKKPETINYRTFKPERDGLFCARIFGPIKDYECLCGKYKRMKFRGIICEKCGVEVTLAKVRRERMGHIELASPVAHIWFLKSLPSRIATMVEMTLKDLEKVLYFENYIVLDPYTTDLKRYQLLSEDDLYAKQDEFGEDGFKAGIGAEAVKSILAGIDLEAERAIMRADLKEATSEAKRKKLVKRLKLVEAFIESGTRPEWMIMDVVPVIPPELRPLVPLDGGRFATSDLNDLYRRVINRNNRLKRLIELRAPDIIVRNEKRMLQESVDALFDNGRRGRAITGTNKRPLKSLSDMLKGKQGRFRQNLLGKRVDYSGRSVIVVGPELKLHQCGLPKKMALELFKPFIYAKLEKYGLATTIKAAKRMVEKERPEVWDILEEVIREHPVLLNRAPTLHRLGIQAFEPILIEGKAIQLHPLVCTAFNADFDGDQMAVHVPLSIEAQLEARVLMMSTNNILNPANGKPIIVPSQDIVLGLYYLSLETPAFTGVEDKEAPLFGTMGEIEHALDSGYLKLHDKIRARVVRTHPDGSRTTEVVPTTPGRMMIGQLLPKHHDVPFALVNQLLTKKKVSDVIDAVYRHCGQKESVIFCDRLMGLGFRQAAKAGISFGKDDMVIPAEKYGLLEKTQAEVKEYEAQYHDGLITAGERYNKVIDAWSRCNDEVAAAMMREISRQDPGKPTNSVWMMSHSGARGSPTQMRQLAGMRGLMAKPSGEIIEQPILSNFKEGLTVAEYFNSTHGARKGLADTALKTANSGYLTRRLVDVAQDCIIVTADCGTERGLTMRAVMDGGEVVSSLSERILGRTAAEDVLDPADGSVIVKANELIGEIDSMHIEKLGVESVKIRSVLTCEAKVGVCAKCYGRDLARGTPVNIGEAVGVIAAQSIGEPGTQLTMRTFHIGGAAQRGAEQSSVEASHDGTVTIRNRNVVSNSAGAPIVMSRNCEIALNDASGRERARFRVPYGARLLVDEDQTVTRGQKLAEWDPYTLPIITERAGLVEYADLLEGVTLVERVDEVTGLTSKVVVDYKQSAKGADLRPRLILKDERGEVLRLANGAEARYFLSPDSILSVENGASVHAGDVLARIPREGSKTRDITGGLPRVAELFEARRPKDHAIIAETDGRVEFGKDYKAKRRIIVKNDETGEETEYLVPKGKHVSVQEGDYVHRGDPLVDGPRVPHDILRVLGVEALSEYLINEIQDVYRLQGVKINDKHIEVVVRQMLQKIEITEPGDTTYLVGELVDRIEFDEENERRLRAGERPAGGLPVLQGITKASLQTLSFISAASFQETTRVLTEAATAGKTDQLLGLKENVIVGRLIPAGTGSVMSRLRSIAAGRDRSTLAATRPALPARDEVSAD.

Residues Cys70, Cys72, Cys85, and Cys88 each contribute to the Zn(2+) site. Residues Asp461, Asp463, and Asp465 each contribute to the Mg(2+) site. Zn(2+) contacts are provided by Cys808, Cys882, Cys889, and Cys892.

It belongs to the RNA polymerase beta' chain family. In terms of assembly, the RNAP catalytic core consists of 2 alpha, 1 beta, 1 beta' and 1 omega subunit. When a sigma factor is associated with the core the holoenzyme is formed, which can initiate transcription. Mg(2+) is required as a cofactor. Requires Zn(2+) as cofactor.

The enzyme catalyses RNA(n) + a ribonucleoside 5'-triphosphate = RNA(n+1) + diphosphate. Functionally, DNA-dependent RNA polymerase catalyzes the transcription of DNA into RNA using the four ribonucleoside triphosphates as substrates. The protein is DNA-directed RNA polymerase subunit beta' of Acidiphilium cryptum (strain JF-5).